A 200-amino-acid chain; its full sequence is Putative manganese exporter (200 aa).

6 helical membrane-spanning segments follow: residues 13-33 (TEHV…AEIG), 53-73 (IIAA…WLGV), 81-101 (PDIL…WILI), 110-130 (SIST…AEIG), 150-170 (WVIV…VLIG), and 180-200 (GLIR…TAFF).

This sequence belongs to the GDT1 family.

It is found in the cell inner membrane. Involved in manganese homeostasis. May function as a manganese exporter. This is Putative manganese exporter from Vibrio cholerae serotype O1 (strain ATCC 39541 / Classical Ogawa 395 / O395).